Here is a 313-residue protein sequence, read N- to C-terminus: MTQLGFLLFIMVATRGCSAAEENLDTNRWGNSFFSSLPRSCKEIKQEHTKAQDGLYFLRTKNGVIYQTFCDMTTAGGGWTLVASVHENNMRGKCTVGDRWSSQQGNRADYPEGDGNWANYNTFGSAEAATSDDYKNPGYFDIQAENLGIWHVPNKSPLHNWRKSSLLRYRTFTGFLQHLGHNLFGLYKKYPVKYGEGKCWTDNGPALPVVYDFGDARKTASYYSPSGQREFTAGYVQFRVFNNERAASALCAGVRVTGCNTEHHCIGGGGFFPEGNPVQCGDFASFDWDGYGTHNGYSSSRKITEAAVLLFYR.

A signal peptide spans 1–18; that stretch reads MTQLGFLLFIMVATRGCS. Positions 32 to 251 constitute a Fibrinogen C-terminal domain; sequence SFFSSLPRSC…NNERAASALC (220 aa). Cysteine 41 and cysteine 70 are disulfide-bonded. Ca(2+) is bound by residues histidine 86, glutamate 87, asparagine 89, glycine 92, glycine 97, aspartate 98, and aspartate 133. Cystine bridges form between cysteine 94–cysteine 280, cysteine 199–cysteine 259, and cysteine 251–cysteine 265. 4 residues coordinate Ca(2+): asparagine 260, glutamate 262, glutamate 274, and aspartate 282. A carbohydrate-binding positions include 262–263 and glutamate 274; that span reads EH. Serine 298 carries GPI-anchor amidated serine lipidation. The propeptide occupies 299-313; it reads SSRKITEAAVLLFYR.

In terms of assembly, monomer. May interact with LTF. As to expression, expressed in small intestinal Paneth cells in uninfected mice. Expression also detected in various other tissues including stomach, kidney, ovary and brain.

The protein resides in the cell membrane. It is found in the secreted. Functionally, lectin that specifically recognizes microbial carbohydrate chains in a calcium-dependent manner. Binds to microbial glycans that contain a terminal acyclic 1,2-diol moiety, including beta-linked D-galactofuranose (beta-Galf), D-phosphoglycerol-modified glycans, D-glycero-D-talo-oct-2-ulosonic acid (KO) and 3-deoxy-D-manno-oct-2-ulosonic acid (KDO). Binds to glycans from Gram-positive and Gram-negative bacteria, including K.pneumoniae, S.pneumoniae, Y.pestis, P.mirabilis and P.vulgaris. Does not bind mammalian glycans. Probably plays a role in the defense system against microorganisms. May function as adipokine that has no effect on basal glucose uptake but enhances insulin-stimulated glucose uptake in adipocytes. Increases AKT phosphorylation in the absence and presence of insulin. May interact with lactoferrin/LTF and increase its uptake, and may thereby play a role in iron absorption. This Mus musculus (Mouse) protein is Intelectin-1a (Itln1).